Reading from the N-terminus, the 343-residue chain is Phenylalanine--tRNA ligase alpha subunit (343 aa).

Glu-256 serves as a coordination point for Mg(2+).

It belongs to the class-II aminoacyl-tRNA synthetase family. Phe-tRNA synthetase alpha subunit type 1 subfamily. Tetramer of two alpha and two beta subunits. The cofactor is Mg(2+).

It localises to the cytoplasm. The enzyme catalyses tRNA(Phe) + L-phenylalanine + ATP = L-phenylalanyl-tRNA(Phe) + AMP + diphosphate + H(+). The polypeptide is Phenylalanine--tRNA ligase alpha subunit (Phytoplasma australiense).